The sequence spans 678 residues: Glycine--tRNA ligase beta subunit (678 aa).

This sequence belongs to the class-II aminoacyl-tRNA synthetase family. In terms of assembly, tetramer of two alpha and two beta subunits.

It localises to the cytoplasm. It catalyses the reaction tRNA(Gly) + glycine + ATP = glycyl-tRNA(Gly) + AMP + diphosphate. This Streptococcus pneumoniae (strain 70585) protein is Glycine--tRNA ligase beta subunit.